A 249-amino-acid polypeptide reads, in one-letter code: Putative ABC transporter ATP-binding protein GSU1281 (249 aa).

In terms of domain architecture, ABC transporter spans 6-236; that stretch reads VEVRDLCHCY…DELLATCRLE (231 aa). ATP is bound at residue 39–46; that stretch reads GANGAGKS.

Belongs to the ABC transporter superfamily.

Its subcellular location is the cell inner membrane. Functionally, probably part of an ABC transporter complex. Responsible for energy coupling to the transport system. This is Putative ABC transporter ATP-binding protein GSU1281 from Geobacter sulfurreducens (strain ATCC 51573 / DSM 12127 / PCA).